Here is a 406-residue protein sequence, read N- to C-terminus: Tyrosine--tRNA ligase (406 aa).

Position 35 (Tyr-35) interacts with L-tyrosine. The 'HIGH' region signature appears at Pro-40–His-49. Positions 168 and 172 each coordinate L-tyrosine. Positions Lys-228 to Ser-232 match the 'KMSKS' region motif. Lys-231 contacts ATP. An S4 RNA-binding domain is found at Ile-339–Phe-405.

The protein belongs to the class-I aminoacyl-tRNA synthetase family. TyrS type 1 subfamily. Homodimer.

It localises to the cytoplasm. The enzyme catalyses tRNA(Tyr) + L-tyrosine + ATP = L-tyrosyl-tRNA(Tyr) + AMP + diphosphate + H(+). Catalyzes the attachment of tyrosine to tRNA(Tyr) in a two-step reaction: tyrosine is first activated by ATP to form Tyr-AMP and then transferred to the acceptor end of tRNA(Tyr). The sequence is that of Tyrosine--tRNA ligase from Treponema denticola (strain ATCC 35405 / DSM 14222 / CIP 103919 / JCM 8153 / KCTC 15104).